A 1486-amino-acid polypeptide reads, in one-letter code: MIERGKFRSLTLINWNGFFARTFDLDELVTTLSGGNGAGKSTTMAAFVTALIPDLTLLHFRNTTEAGATSGSRDKGLHGKLKAGVCYSMLDTINSRHQRVVVGVRLQQVAGRDRKVDIKPFAIQGLPMSVQPTQLVTETLNERQARVLPLNELKDKLEAMEGVQFKQFNSITDYHSLMFELGIIARRLRSASDRSKFYRLIEASLYGGISSAITRSLRDYLLPENSGVRKAFQDMEAALRENRMTLEAIRVTQSDRDLFKHLISEATNYVAADYMRHANERRVHLDKALEFRRELHTSRQQLAAEQYKHVDMARELAEHNGAEGDLEADYQAASDHLNLVQTALRQQEKIERYEADLDELQIRLEEQNEVVAEAIERQEENEARAEAAELEVDELKSQLADYQQALDVQQTRAIQYNQAIAALNRAKELCHLPDLTADSAAEWLETFQAKELEATEKMLSLEQKMSMAQTAHSQFEQAYQLVVAINGPLARNEAWDVARELLREGVDQRHLAEQVQPLRMRLSELEQRLREQQEAERLLADFCKRQGKNFDIDELEALHQELEARIASLSDSVSNAREERMALRQEQEQLQSRIQSLMQRAPVWLAAQNSLNQLSEQCGEEFTSSQDVTEFLQQLLEREREAIVERDEVGARKNAVDEEIERLSQPGGSEDQRLNALAERFGGVLLSEIYDDVSLEDAPYFSALYGPSRHAIVVPDLSQVTEHLEGLTDCPEDLYLIEGDPQSFDDSVFSVDELEKAVVVKIADRQWRYSRFPEVPLFGRAARESRIESLHAEREVLSERFATLSFDVQKTQRLHQAFSRFIGSHLAVAFESDPEAEIRQLNSRRVELERALSNHENDNQQQRIQFEQAKEGVTALNRILPRLNLLADDSLADRVDEIRERLDEAQEAARFVQQFGNQLAKLEPIVSVLQSDPEQFEQLKEDYAYSQQMQRDARQQAFALTEVVQRRAHFSYSDSAEMLSGNSDLNEKLRERLEQAEAERTRAREALRGHAAQLNQYNQVLASLKSSYDTKKELLNDLQRELQDIGVRADSGAEERARIRRDELHAQLSNNRSRRNQLEKALTFCEAEMDNLTRKLRKLERDYFEMREQVVTAKAGWCAVMRMVKDNGVERRLHRRELAYLSADDLRSMSDKALGALRLAVADNEHLRDVLRMSEDPKRPERKIQFFVAVYQHLRERIRQDIIRTDDPVEAIEQMEIELSRLTEELTSREQKLAISSRSVANIIRKTIQREQNRIRMLNQGLQNVSFGQVNSVRLNVNVRETHAMLLDVLSEQHEQHQDLFNSNRLTFSEALAKLYQRLNPQIDMGQRTPQTIGEELLDYRNYLEMEVEVNRGSDGWLRAESGALSTGEAIGTGMSILVMVVQSWEDESRRLRGKDISPCRLLFLDEAARLDARSIATLFELCERLQMQLIIAAPENISPEKGTTYKLVRKVFQNTEHVHVVGLRGFAPQLPETLPGSDEAPSQAS.

34 to 41 (GGNGAGKS) is a binding site for ATP. 3 coiled-coil regions span residues 326–418 (LEAD…QYNQ), 444–480 (LETF…QAYQ), and 509–603 (RHLA…RAPV). Residues 666–783 (PGGSEDQRLN…EVPLFGRAAR (118 aa)) form a flexible hinge region. 3 coiled-coil regions span residues 835–923 (EAEI…AKLE), 977–1115 (EMLS…TAKA), and 1209–1266 (VEAI…QNVS).

This sequence belongs to the SMC family. MukB subfamily. As to quaternary structure, homodimerization via its hinge domain. Binds to DNA via its C-terminal region. Interacts, and probably forms a ternary complex, with MukE and MukF via its C-terminal region. The complex formation is stimulated by calcium or magnesium. Interacts with tubulin-related protein FtsZ.

The protein localises to the cytoplasm. It localises to the nucleoid. Functionally, plays a central role in chromosome condensation, segregation and cell cycle progression. Functions as a homodimer, which is essential for chromosome partition. Involved in negative DNA supercoiling in vivo, and by this means organize and compact chromosomes. May achieve or facilitate chromosome segregation by condensation DNA from both sides of a centrally located replisome during cell division. The polypeptide is Chromosome partition protein MukB (Escherichia coli O6:H1 (strain CFT073 / ATCC 700928 / UPEC)).